The primary structure comprises 319 residues: Peroxidase 13 (319 aa).

The first 22 residues, M1–A22, serve as a signal peptide directing secretion. Disulfide bonds link C33–C111, C66–C71, C117–C315, and C196–C222. The active-site Proton acceptor is H64. Positions 65, 68, 70, 72, and 74 each coordinate Ca(2+). P158 contacts substrate. H189 provides a ligand contact to heme b. Residue T190 coordinates Ca(2+). The Ca(2+) site is built by D235, S238, and D243. N280 is a glycosylation site (N-linked (GlcNAc...) asparagine).

Belongs to the peroxidase family. Classical plant (class III) peroxidase subfamily. The cofactor is heme b. Requires Ca(2+) as cofactor.

It is found in the secreted. It catalyses the reaction 2 a phenolic donor + H2O2 = 2 a phenolic radical donor + 2 H2O. In terms of biological role, removal of H(2)O(2), oxidation of toxic reductants, biosynthesis and degradation of lignin, suberization, auxin catabolism, response to environmental stresses such as wounding, pathogen attack and oxidative stress. These functions might be dependent on each isozyme/isoform in each plant tissue. In Arabidopsis thaliana (Mouse-ear cress), this protein is Peroxidase 13 (PER13).